We begin with the raw amino-acid sequence, 125 residues long: Ribonuclease P protein component (125 aa).

The protein belongs to the RnpA family. In terms of assembly, consists of a catalytic RNA component (M1 or rnpB) and a protein subunit.

It carries out the reaction Endonucleolytic cleavage of RNA, removing 5'-extranucleotides from tRNA precursor.. Its function is as follows. RNaseP catalyzes the removal of the 5'-leader sequence from pre-tRNA to produce the mature 5'-terminus. It can also cleave other RNA substrates such as 4.5S RNA. The protein component plays an auxiliary but essential role in vivo by binding to the 5'-leader sequence and broadening the substrate specificity of the ribozyme. The protein is Ribonuclease P protein component of Ruegeria pomeroyi (strain ATCC 700808 / DSM 15171 / DSS-3) (Silicibacter pomeroyi).